Reading from the N-terminus, the 479-residue chain is Adenosylhomocysteinase (479 aa).

Residues Thr66, Asp142, and Glu203 each contribute to the substrate site. 204–206 is a binding site for NAD(+); it reads TTT. 2 residues coordinate substrate: Lys233 and Asp237. NAD(+) contacts are provided by residues Asn238, 267 to 272, Glu290, Asn325, 346 to 348, and Asn394; these read GYGDVG and IGH.

Belongs to the adenosylhomocysteinase family. The cofactor is NAD(+).

Its subcellular location is the cytoplasm. It carries out the reaction S-adenosyl-L-homocysteine + H2O = L-homocysteine + adenosine. Its pathway is amino-acid biosynthesis; L-homocysteine biosynthesis; L-homocysteine from S-adenosyl-L-homocysteine: step 1/1. In terms of biological role, may play a key role in the regulation of the intracellular concentration of adenosylhomocysteine. This Nitratidesulfovibrio vulgaris (strain ATCC 29579 / DSM 644 / CCUG 34227 / NCIMB 8303 / VKM B-1760 / Hildenborough) (Desulfovibrio vulgaris) protein is Adenosylhomocysteinase.